Consider the following 152-residue polypeptide: Deoxyuridine 5'-triphosphate nucleotidohydrolase (152 aa).

Residues 71-73 (RSG), Asn84, and 88-90 (TID) contribute to the substrate site.

It belongs to the dUTPase family. It depends on Mg(2+) as a cofactor.

It catalyses the reaction dUTP + H2O = dUMP + diphosphate + H(+). It participates in pyrimidine metabolism; dUMP biosynthesis; dUMP from dCTP (dUTP route): step 2/2. In terms of biological role, this enzyme is involved in nucleotide metabolism: it produces dUMP, the immediate precursor of thymidine nucleotides and it decreases the intracellular concentration of dUTP so that uracil cannot be incorporated into DNA. This chain is Deoxyuridine 5'-triphosphate nucleotidohydrolase, found in Roseobacter denitrificans (strain ATCC 33942 / OCh 114) (Erythrobacter sp. (strain OCh 114)).